Consider the following 147-residue polypeptide: UPF0306 protein YhbP (147 aa).

This sequence belongs to the UPF0306 family.

The chain is UPF0306 protein YhbP from Escherichia coli (strain K12 / MC4100 / BW2952).